Here is a 205-residue protein sequence, read N- to C-terminus: uncharacterized protein (205 aa).

The HD domain occupies 26 to 129; sequence DWHHVSRVAD…VQDADRLDAI (104 aa).

This is an uncharacterized protein from Bacillus subtilis (strain 168).